Consider the following 249-residue polypeptide: Phosphoribosylaminoimidazole-succinocarboxamide synthase (249 aa).

This sequence belongs to the SAICAR synthetase family.

It carries out the reaction 5-amino-1-(5-phospho-D-ribosyl)imidazole-4-carboxylate + L-aspartate + ATP = (2S)-2-[5-amino-1-(5-phospho-beta-D-ribosyl)imidazole-4-carboxamido]succinate + ADP + phosphate + 2 H(+). It functions in the pathway purine metabolism; IMP biosynthesis via de novo pathway; 5-amino-1-(5-phospho-D-ribosyl)imidazole-4-carboxamide from 5-amino-1-(5-phospho-D-ribosyl)imidazole-4-carboxylate: step 1/2. The protein is Phosphoribosylaminoimidazole-succinocarboxamide synthase of Roseiflexus sp. (strain RS-1).